The sequence spans 232 residues: Nucleolar protein 16 (232 aa).

Residues 1-14 show a composition bias toward basic residues; the sequence is MGRELQKRKKRSSR. 2 disordered regions span residues 1–20 and 113–161; these read MGRE…VQTH and RSDN…QSSR. The segment covering 132 to 154 has biased composition (basic and acidic residues); it reads EEPKPKNPTHDIEWHGISDDRQE.

This sequence belongs to the NOP16 family. In terms of assembly, component of the pre-66S ribosomal particle.

It is found in the nucleus. It localises to the nucleolus. Involved in the biogenesis of the 60S ribosomal subunit. The protein is Nucleolar protein 16 (nop-16) of Neurospora crassa (strain ATCC 24698 / 74-OR23-1A / CBS 708.71 / DSM 1257 / FGSC 987).